Reading from the N-terminus, the 65-residue chain is Sec-independent protein translocase protein TatA (65 aa).

Residues 1–21 (MFGLGGQELVLILLIILLLFG) traverse the membrane as a helical segment.

It belongs to the TatA/E family. As to quaternary structure, forms a complex with TatC.

The protein localises to the cell inner membrane. Its function is as follows. Part of the twin-arginine translocation (Tat) system that transports large folded proteins containing a characteristic twin-arginine motif in their signal peptide across membranes. TatA could form the protein-conducting channel of the Tat system. This is Sec-independent protein translocase protein TatA from Chlorobium phaeobacteroides (strain DSM 266 / SMG 266 / 2430).